A 98-amino-acid polypeptide reads, in one-letter code: Dehydrin HIRD11 (98 aa).

Residues 1–98 (MAGLINKIGD…HSSSSDSDSD (98 aa)) form a disordered region. Positions 19–72 (KEGEHKKEEEHKKHVDEHKSGEHKEGIVDKIKDKIHGGEGKSHDGEGKSHDGEK) are enriched in basic and acidic residues. Basic residues predominate over residues 73-82 (KKKKDKKEKK).

This sequence belongs to the KS-type dehydrin family. In terms of assembly, interacts with PXL1. Post-translationally, phosphorylated in vivo. Phosphorylated in vitro by PXL1. As to expression, highly expressed in the cambial zone of the stem vasculature (at protein level). Expressed in roots, rosettes leaves, stems, cauline leaves, flowers and siliques.

Its subcellular location is the cytoplasm. The protein resides in the nucleus. Intrinsically disordered and metal-binding protein. Binds to the divalent cations cobalt, nickel, copper and zinc, but not to magnesium, calcium, manganese or cadmium. Binding to metal ions decreases disordered state, decreases susceptibility to trypsin and promotes self-association. Can reduce the formation of reactive oxygen species (ROS) in a copper-ascorbate in vitro system. The polypeptide is Dehydrin HIRD11 (Arabidopsis thaliana (Mouse-ear cress)).